The chain runs to 119 residues: Fluoride-specific ion channel FluC 2 (119 aa).

The chain crosses the membrane as a helical span at residues 46 to 66; sequence FALGLLTFAGVTGDAALLVGV. The Na(+) site is built by glycine 70 and threonine 73. The helical transmembrane segment at 96 to 116 threads the bilayer; sequence LNAVGNLACALVGIGLAWGIV.

Belongs to the fluoride channel Fluc/FEX (TC 1.A.43) family.

It is found in the cell membrane. The enzyme catalyses fluoride(in) = fluoride(out). Na(+) is not transported, but it plays an essential structural role and its presence is essential for fluoride channel function. In terms of biological role, fluoride-specific ion channel. Important for reducing fluoride concentration in the cell, thus reducing its toxicity. The chain is Fluoride-specific ion channel FluC 2 from Haloarcula marismortui (strain ATCC 43049 / DSM 3752 / JCM 8966 / VKM B-1809) (Halobacterium marismortui).